Reading from the N-terminus, the 126-residue chain is Glycine cleavage system H protein (126 aa).

The region spanning 24–106 is the Lipoyl-binding domain; the sequence is TITVGITDHA…YGEGWFFRMK (83 aa). K65 carries the N6-lipoyllysine modification.

This sequence belongs to the GcvH family. In terms of assembly, the glycine cleavage system is composed of four proteins: P, T, L and H. (R)-lipoate is required as a cofactor.

In terms of biological role, the glycine cleavage system catalyzes the degradation of glycine. The H protein shuttles the methylamine group of glycine from the P protein to the T protein. This Psychrobacter arcticus (strain DSM 17307 / VKM B-2377 / 273-4) protein is Glycine cleavage system H protein.